The sequence spans 76 residues: uncharacterized protein (76 aa).

The next 3 helical transmembrane spans lie at 2 to 22 (LKVA…YSLF), 28 to 48 (LLIV…VEAI), and 56 to 76 (EYLL…KFII).

It is found in the cell membrane. This is an uncharacterized protein from Bacillus subtilis (strain 168).